We begin with the raw amino-acid sequence, 176 residues long: Large ribosomal subunit protein uL10 (176 aa).

Belongs to the universal ribosomal protein uL10 family. As to quaternary structure, part of the ribosomal stalk of the 50S ribosomal subunit. The N-terminus interacts with L11 and the large rRNA to form the base of the stalk. The C-terminus forms an elongated spine to which L12 dimers bind in a sequential fashion forming a multimeric L10(L12)X complex.

Its function is as follows. Forms part of the ribosomal stalk, playing a central role in the interaction of the ribosome with GTP-bound translation factors. The chain is Large ribosomal subunit protein uL10 from Acaryochloris marina (strain MBIC 11017).